The primary structure comprises 331 residues: Light-harvesting complex I LH35 proteins (331 aa).

Its subcellular location is the plastid. The protein localises to the chloroplast. The polypeptide is Light-harvesting complex I LH35 proteins (Euglena gracilis).